Reading from the N-terminus, the 509-residue chain is H/ACA ribonucleoprotein complex subunit DKC1 (509 aa).

The segment at methionine 1–glutamate 24 is disordered. At alanine 2 the chain carries N-acetylalanine. Positions alanine 2–proline 21 are nucleolar localization. Residues proline 10–arginine 19 show a composition bias toward basic residues. Residues lysine 20, lysine 39, and lysine 43 each participate in a glycyl lysine isopeptide (Lys-Gly) (interchain with G-Cter in SUMO2) cross-link. Residue aspartate 125 is the Nucleophile of the active site. Lysine 191 participates in a covalent cross-link: Glycyl lysine isopeptide (Lys-Gly) (interchain with G-Cter in SUMO2). The PUA domain occupies lysine 297–glutamate 372. At serine 387 the chain carries Phosphoserine. Residue lysine 394 forms a Glycyl lysine isopeptide (Lys-Gly) (interchain with G-Cter in SUMO2) linkage. Lysine 413 is covalently cross-linked (Glycyl lysine isopeptide (Lys-Gly) (interchain with G-Cter in SUMO1); alternate). A Glycyl lysine isopeptide (Lys-Gly) (interchain with G-Cter in SUMO2); alternate cross-link involves residue lysine 413. A Glycyl lysine isopeptide (Lys-Gly) (interchain with G-Cter in SUMO2) cross-link involves residue lysine 424. Residues lysine 446 to glutamate 509 are nuclear and nucleolar localization. Residues arginine 447 to glutamate 509 form a disordered region. Phosphoserine occurs at positions 451, 453, and 455. Threonine 458 is modified (phosphothreonine). Over residues glutamate 466–lysine 476 the composition is skewed to basic residues. Serine 481 bears the Phosphoserine mark. Threonine 485 carries the phosphothreonine modification. A Phosphoserine modification is found at serine 508.

Belongs to the pseudouridine synthase TruB family. As to quaternary structure, part of the H/ACA small nucleolar ribonucleoprotein (H/ACA snoRNP) complex, which contains NHP2/NOLA2, GAR1/NOLA1, NOP10/NOLA3, and DKC1/NOLA4, which is presumed to be the catalytic subunit. The complex contains a stable core formed by binding of one or two NOP10-DKC1 heterodimers to NHP2; GAR1 subsequently binds to this core via DKC1. The complex binds a box H/ACA small nucleolar RNA (snoRNA), which may target the specific site of modification within the RNA substrate. During assembly, the complex contains NAF1 instead of GAR1/NOLA1. The complex also interacts with TERC, which contains a 3'-terminal domain related to the box H/ACA snoRNAs. Specific interactions with snoRNAs or TERC are mediated by GAR1 and NHP2. Associates with NOLC1/NOPP140. H/ACA snoRNPs interact with the SMN complex, consisting of SMN1 or SMN2, GEMIN2/SIP1, DDX20/GEMIN3, and GEMIN4. This is mediated by interaction between GAR1 and SMN1 or SMN2. The SMN complex may be required for correct assembly of the H/ACA snoRNP complex. Component of the telomerase holoenzyme complex composed of one molecule of TERT, one molecule of WRAP53/TCAB1, two molecules of H/ACA ribonucleoprotein complex subunits DKC1, NOP10, NHP2 and GAR1, and a telomerase RNA template component (TERC). The telomerase holoenzyme complex is associated with TEP1, SMG6/EST1A and POT1. Interacts with SHQ1; this interaction may lead to the stabilization of DKC1, from the time of its synthesis until its association with NOP10, NHP2, and NAF1 at the nascent H/ACA RNA. Interacts with HMBOX1. Interacts with DHX36. As to expression, ubiquitously expressed, with elevated levels in Purkinje cells, the olfactory bulb, and Leydig cells of the testis.

It localises to the nucleus. The protein resides in the nucleolus. It is found in the cajal body. It carries out the reaction uridine in 5S rRNA = pseudouridine in 5S rRNA. In terms of biological role, catalytic subunit of H/ACA small nucleolar ribonucleoprotein (H/ACA snoRNP) complex, which catalyzes pseudouridylation of rRNA. This involves the isomerization of uridine such that the ribose is subsequently attached to C5, instead of the normal N1. Each rRNA can contain up to 100 pseudouridine ('psi') residues, which may serve to stabilize the conformation of rRNAs. Required for ribosome biogenesis and telomere maintenance. Also required for correct processing or intranuclear trafficking of TERC, the RNA component of the telomerase reverse transcriptase (TERT) holoenzyme. This is H/ACA ribonucleoprotein complex subunit DKC1 (Dkc1) from Mus musculus (Mouse).